Consider the following 198-residue polypeptide: Dynein axonemal light chain 1 (198 aa).

LRR repeat units follow at residues 49–70, 71–92, 94–115, and 116–137; these read ACKHLALSTNNIEKISSLSGME, NLRILSLGRNLIKKIENLDAVA, TLEELWISYNQIASLSGIEKLV, and NLRVLYMSNNKITNWGEIDKLA. An LRRCT domain is found at 157–195; the sequence is KENNATSEYRIEVVKRLPNLKKLDGMPVDVDEREQANVA.

Belongs to the dynein light chain LC1-type family. As to quaternary structure, interacts with OCAD2, a outer arm dynein heavy chain. Interacts with tubulin (previously called p45) located within the A-tubule of the outer doublets in a ATP-independent manner.

Its subcellular location is the cytoplasm. It is found in the cytoskeleton. The protein resides in the flagellum axoneme. Part of the multisubunit axonemal ATPase complexes that generate the force for flagellar motility and govern beat frequency. Component of the outer arm dynein (ODA). May be involved in a mechanosensory feedback mechanism controlling ODA activity based on external conformational cues by tethering the outer arm dynein heavy chain (ODA2) to the A-tubule of the outer doublet microtubules within the axoneme. This Chlamydomonas reinhardtii (Chlamydomonas smithii) protein is Dynein axonemal light chain 1.